A 431-amino-acid polypeptide reads, in one-letter code: Tryptophan synthase beta chain (431 aa).

K109 carries the post-translational modification N6-(pyridoxal phosphate)lysine.

Belongs to the TrpB family. In terms of assembly, tetramer of two alpha and two beta chains. Pyridoxal 5'-phosphate is required as a cofactor.

The catalysed reaction is (1S,2R)-1-C-(indol-3-yl)glycerol 3-phosphate + L-serine = D-glyceraldehyde 3-phosphate + L-tryptophan + H2O. It participates in amino-acid biosynthesis; L-tryptophan biosynthesis; L-tryptophan from chorismate: step 5/5. Functionally, the beta subunit is responsible for the synthesis of L-tryptophan from indole and L-serine. This is Tryptophan synthase beta chain from Deinococcus radiodurans (strain ATCC 13939 / DSM 20539 / JCM 16871 / CCUG 27074 / LMG 4051 / NBRC 15346 / NCIMB 9279 / VKM B-1422 / R1).